The chain runs to 118 residues: uncharacterized protein (118 aa).

Residues 6 to 104 form the HTH hxlR-type domain; it reads CGFEVTKEVI…WGGYYAEQEY (99 aa).

This is an uncharacterized protein from Bacillus subtilis (strain 168).